We begin with the raw amino-acid sequence, 419 residues long: Histone acetyltransferase type B subunit 2 (419 aa).

WD repeat units follow at residues 131 to 171 (PHDG…VEAL), 177 to 217 (YHTE…KNIK), 225 to 265 (AHTD…IIHN), 267 to 307 (NTKK…NPLY), and 311 to 351 (GHED…AEQT). The interval 353–357 (DEIED) is interaction with the histone H4 N-terminus. The stretch at 368 to 408 (GHKTSINDIAVNPNINWLVASAEEDNIVQIWKCSSNIPRIG) is one WD 6 repeat.

The protein belongs to the WD repeat RBAP46/RBAP48/MSI1 family. Component of the HAT-B complex composed of at least HAT1 and HAT2. The HAT-B complex binds to histone H4 tail.

It is found in the cytoplasm. The protein resides in the nucleus. Regulatory subunit of the histone acetylase B (HAT-B) complex. The complex acetylates Lys-12 of histone H4 which is required for telomeric silencing. The chain is Histone acetyltransferase type B subunit 2 (HAT2) from Candida glabrata (strain ATCC 2001 / BCRC 20586 / JCM 3761 / NBRC 0622 / NRRL Y-65 / CBS 138) (Yeast).